Reading from the N-terminus, the 177-residue chain is MSEFITVARPYAKAAFDFAVEHQSVERWQDMLAFAAEVTKNEQMAELLSGALAPETLAESFIAVCGEQLDENGQNLIRVMAENGRLNALPDVLEQFIHLRAVSEATAEVDVISAAALSEQQLAKISAAMEKRLSRKVKLNCKIDKSVMAGVIIRAGDMVIDGSVRGRLERLADVLQS.

It belongs to the ATPase delta chain family. In terms of assembly, F-type ATPases have 2 components, F(1) - the catalytic core - and F(0) - the membrane proton channel. F(1) has five subunits: alpha(3), beta(3), gamma(1), delta(1), epsilon(1). F(0) has three main subunits: a(1), b(2) and c(10-14). The alpha and beta chains form an alternating ring which encloses part of the gamma chain. F(1) is attached to F(0) by a central stalk formed by the gamma and epsilon chains, while a peripheral stalk is formed by the delta and b chains.

It is found in the cell inner membrane. Functionally, f(1)F(0) ATP synthase produces ATP from ADP in the presence of a proton or sodium gradient. F-type ATPases consist of two structural domains, F(1) containing the extramembraneous catalytic core and F(0) containing the membrane proton channel, linked together by a central stalk and a peripheral stalk. During catalysis, ATP synthesis in the catalytic domain of F(1) is coupled via a rotary mechanism of the central stalk subunits to proton translocation. Its function is as follows. This protein is part of the stalk that links CF(0) to CF(1). It either transmits conformational changes from CF(0) to CF(1) or is implicated in proton conduction. This Shigella boydii serotype 18 (strain CDC 3083-94 / BS512) protein is ATP synthase subunit delta.